The chain runs to 406 residues: chitinase-like effector (406 aa).

Positions 1-23 (MLTLLPSLILLLSTLSLSTPANA) are cleaved as a signal peptide. In terms of domain architecture, GH18 spans 26 to 405 (AIAKAYYPGW…DAVRHGAGFK (380 aa)). Residues Tyr-138 and Trp-384 each coordinate chitin.

It belongs to the glycosyl hydrolase 18 family.

The protein resides in the secreted. Catalytically impaired chitinase that binds efficiently to chitin, but not to chitosan, xylan, or cellulose. Despite the lack of chitinolytic activity, retains substrate binding specificity and acts as an effector to prevent chitin-triggered immunity by sequestering immunogenic chitin fragments. The polypeptide is chitinase-like effector (Chi) (Moniliophthora roreri (Frosty pod rot fungus)).